Consider the following 217-residue polypeptide: UPF0711 protein C18orf21 homolog (217 aa).

S126 carries the post-translational modification Phosphoserine. Phosphothreonine is present on residues T130 and T139. The tract at residues 131-190 (AANKASPKTPKRTAPGSANLGQSTNGSKGKSPSLTIRTPTSGQSTPICSSRNGSKRKKHF) is disordered. Residues 149 to 182 (NLGQSTNGSKGKSPSLTIRTPTSGQSTPICSSRN) are compositionally biased toward polar residues.

It belongs to the UPF0711 family.

The protein is UPF0711 protein C18orf21 homolog of Mus musculus (Mouse).